The sequence spans 424 residues: Glutathione reductase (424 aa).

Lysine 8 contributes to the FAD binding site. A glutathione-binding site is contributed by tyrosine 56. Alanine 72 is a binding site for FAD. Residues alanine 137, isoleucine 140, glutamate 143, arginine 160, arginine 166, and glycine 236 each contribute to the NADP(+) site. Aspartate 277 is a binding site for FAD. Leucine 283 is a binding site for NADP(+). Threonine 285 is a binding site for FAD. Residue arginine 293 coordinates glutathione. An NADP(+)-binding site is contributed by valine 316. Histidine 413 is a binding site for FAD. The Proton acceptor role is filled by histidine 413.

The protein belongs to the class-I pyridine nucleotide-disulfide oxidoreductase family. Homodimer; disulfide-linked. FAD is required as a cofactor.

The protein localises to the mitochondrion. It is found in the cytoplasm. The enzyme catalyses 2 glutathione + NADP(+) = glutathione disulfide + NADPH + H(+). In terms of biological role, catalyzes the reduction of glutathione disulfide (GSSG) to reduced glutathione (GSH). Constitutes the major mechanism to maintain a high GSH:GSSG ratio in the cytosol. The sequence is that of Glutathione reductase (Gsr) from Rattus norvegicus (Rat).